The following is a 447-amino-acid chain: Cysteine--tRNA ligase (447 aa).

Cys-28 contacts Zn(2+). Positions 30-40 (PTVYNYIHVGN) match the 'HIGH' region motif. Residues Cys-211, His-236, and Glu-240 each contribute to the Zn(2+) site. A 'KMSKS' region motif is present at residues 268–272 (KMSKS). Position 271 (Lys-271) interacts with ATP.

Belongs to the class-I aminoacyl-tRNA synthetase family. In terms of assembly, monomer. Zn(2+) serves as cofactor.

Its subcellular location is the cytoplasm. The enzyme catalyses tRNA(Cys) + L-cysteine + ATP = L-cysteinyl-tRNA(Cys) + AMP + diphosphate. This chain is Cysteine--tRNA ligase, found in Streptococcus pneumoniae serotype 4 (strain ATCC BAA-334 / TIGR4).